A 157-amino-acid polypeptide reads, in one-letter code: Alanyl-tRNA editing protein AlaX-S (157 aa).

The Zn(2+) site is built by histidine 9, histidine 13, cysteine 116, and histidine 120.

This sequence belongs to the class-II aminoacyl-tRNA synthetase family. Editing domain AlaX-S subfamily. As to quaternary structure, monomer and homodimer; the dimer is less active in tRNA editing and does not have a zinc ion associated with it. Another report shows only a monomeric form. The cofactor is Zn(2+).

It is found in the cytoplasm. Its function is as follows. Functions in trans to edit the amino acid moiety from mischarged charged Ser-tRNA(Ala). Has little activity against Gly-tRNA(Ala). This Pyrococcus horikoshii (strain ATCC 700860 / DSM 12428 / JCM 9974 / NBRC 100139 / OT-3) protein is Alanyl-tRNA editing protein AlaX-S (alaXS).